A 284-amino-acid chain; its full sequence is ASC1-like protein 3 (284 aa).

The next 6 membrane-spanning stretches (helical) occupy residues 9–29 (SSFF…RFFL), 69–89 (LTYY…EPWS), 108–128 (LMLF…ALVA), 148–168 (ILIG…ILAL), 195–215 (FGLF…FWII), and 243–263 (MLLT…LMIM). The 208-residue stretch at 60-267 (VKFSESIWKL…ICLMIMKQLN (208 aa)) folds into the TLC domain.

The protein resides in the endoplasmic reticulum membrane. Mediates resistance to sphinganine-analog mycotoxins (SAMs) by restoring the sphingolipid biosynthesis. Could salvage the transport of GPI-anchored proteins from the endoplasmic reticulum to the Golgi apparatus in ceramides-depleted cells after SAM exposure. This chain is ASC1-like protein 3, found in Oryza sativa subsp. japonica (Rice).